Here is a 302-residue protein sequence, read N- to C-terminus: Putative gluconeogenesis factor (302 aa).

It belongs to the gluconeogenesis factor family.

It is found in the cytoplasm. Functionally, required for morphogenesis under gluconeogenic growth conditions. The polypeptide is Putative gluconeogenesis factor (ybhK) (Salmonella typhimurium (strain LT2 / SGSC1412 / ATCC 700720)).